The chain runs to 214 residues: MRPKTGQVGCETPEELGPGPRQRWPLLLLGLAMVAHGLLRPMVAPQSGDPDPGASVGSSRSSLRSLWGRLLLQPSPQRADPRCWPRGFWSEPQSLCYVFGTGTKVTVLGQPKANPTVTLFPPSSEELQANKATLVCLISDFYPGAVTVAWKADGSPVKAGVETTKPSKQSNNKYAASSYLSLTPEQWKSHRSYSCQVTHEGSTVEKTVAPTECS.

A signal peptide spans 1-35; sequence MRPKTGQVGCETPEELGPGPRQRWPLLLLGLAMVA. The tract at residues 98-109 is j region; that stretch reads VFGTGTKVTVLG. Residues 110–214 are c region; sequence QPKANPTVTL…EKTVAPTECS (105 aa). Positions 115–209 constitute an Ig-like C1-type domain; the sequence is PTVTLFPPSS…EGSTVEKTVA (95 aa). The cysteines at positions 136 and 195 are disulfide-linked.

In terms of tissue distribution, contrary to IGLL1, not expressed in pre-B-cells.

It localises to the secreted. This Homo sapiens (Human) protein is Immunoglobulin lambda-like polypeptide 5 (IGLL5).